Consider the following 235-residue polypeptide: C-type lectin domain family 2 member D-related protein (235 aa).

The interval 1-50 (MPSSAHLQDPPPHLSRTLTQDEEQTSLRQSSSCGPSTTSASASESLSGST) is disordered. Residues 1–75 (MPSSAHLQDP…KIIPTESAAK (75 aa)) are Cytoplasmic-facing. A compositionally biased stretch (low complexity) spans 30-50 (SSSCGPSTTSASASESLSGST). The helical; Signal-anchor for type II membrane protein transmembrane segment at 76–96 (LLCCYAVFMALTVVVIALSIA) threads the bilayer. The Extracellular segment spans residues 97–235 (LSVKKTPQIS…KLNSYTSQCP (139 aa)). Positions 121-232 (FGNKCYYFNE…ICSKLNSYTS (112 aa)) constitute a C-type lectin domain. Asparagine 134 is a glycosylation site (N-linked (GlcNAc...) asparagine).

The protein resides in the cell membrane. Lectin-type cell surface receptor. The chain is C-type lectin domain family 2 member D-related protein from Rattus norvegicus (Rat).